Reading from the N-terminus, the 197-residue chain is UPF0251 protein CT1277 (197 aa).

The disordered stretch occupies residues 138-197 (GGGFGGGRRGGGKCRGFRSGLDRGPGHGEGRCQGEGHGNGNGNGNGQGRMRRNQQEGGEV). The span at 157–171 (GLDRGPGHGEGRCQG) shows a compositional bias: basic and acidic residues. Residues 172–184 (EGHGNGNGNGNGQ) show a composition bias toward gly residues.

It belongs to the UPF0251 family.

This is UPF0251 protein CT1277 from Chlorobaculum tepidum (strain ATCC 49652 / DSM 12025 / NBRC 103806 / TLS) (Chlorobium tepidum).